The chain runs to 513 residues: Activin receptor type-2A (513 aa).

The first 19 residues, 1-19 (MGAAAKLAFAVFLISCSSG), serve as a signal peptide directing secretion. The Extracellular segment spans residues 20–135 (AILGRSETQE…TSNPVTPKPP (116 aa)). 5 disulfides stabilise this stretch: Cys30-Cys60, Cys50-Cys78, Cys85-Cys104, Cys91-Cys103, and Cys105-Cys110. N-linked (GlcNAc...) asparagine glycosylation is found at Asn43 and Asn66. The chain crosses the membrane as a helical span at residues 136–161 (YYNILLYSLVPLMLIAGIVICAFWVY). The Cytoplasmic segment spans residues 162–513 (RHHMMAYPPV…VDFPPKESSL (352 aa)). In terms of domain architecture, Protein kinase spans 192 to 485 (LQLLEVKARG…GERITQMQRL (294 aa)). ATP-binding positions include 198–206 (KARGRFGCV) and Lys219. The active-site Proton acceptor is the Asp322.

Belongs to the protein kinase superfamily. TKL Ser/Thr protein kinase family. TGFB receptor subfamily. In terms of assembly, part of a complex consisting of MAGI2/ARIP1, ACVR2A, ACVR1B and SMAD3. Interacts with MAGI2/ARIP1. Interacts with type I receptor ACVR1. Interacts with BMP7. Interacts with TSC22D1/TSC-22. Interacts with activin A/INHBA. Mg(2+) serves as cofactor. Requires Mn(2+) as cofactor.

The protein resides in the cell membrane. It carries out the reaction L-threonyl-[receptor-protein] + ATP = O-phospho-L-threonyl-[receptor-protein] + ADP + H(+). The enzyme catalyses L-seryl-[receptor-protein] + ATP = O-phospho-L-seryl-[receptor-protein] + ADP + H(+). Its function is as follows. On ligand binding, forms a receptor complex consisting of two type II and two type I transmembrane serine/threonine kinases. Type II receptors phosphorylate and activate type I receptors which autophosphorylate, then bind and activate SMAD transcriptional regulators. Receptor for activin A, activin B and inhibin A. Mediates induction of adipogenesis by GDF6. The polypeptide is Activin receptor type-2A (Rattus norvegicus (Rat)).